Reading from the N-terminus, the 257-residue chain is Acyl-[acyl-carrier-protein]--UDP-N-acetylglucosamine O-acyltransferase (257 aa).

It belongs to the transferase hexapeptide repeat family. LpxA subfamily. As to quaternary structure, homotrimer.

It localises to the cytoplasm. The enzyme catalyses a (3R)-hydroxyacyl-[ACP] + UDP-N-acetyl-alpha-D-glucosamine = a UDP-3-O-[(3R)-3-hydroxyacyl]-N-acetyl-alpha-D-glucosamine + holo-[ACP]. It participates in glycolipid biosynthesis; lipid IV(A) biosynthesis; lipid IV(A) from (3R)-3-hydroxytetradecanoyl-[acyl-carrier-protein] and UDP-N-acetyl-alpha-D-glucosamine: step 1/6. Involved in the biosynthesis of lipid A, a phosphorylated glycolipid that anchors the lipopolysaccharide to the outer membrane of the cell. The protein is Acyl-[acyl-carrier-protein]--UDP-N-acetylglucosamine O-acyltransferase of Anaeromyxobacter sp. (strain K).